The primary structure comprises 173 residues: Peptide methionine sulfoxide reductase MsrA (173 aa).

Cys-10 is a catalytic residue.

The protein belongs to the MsrA Met sulfoxide reductase family.

It catalyses the reaction L-methionyl-[protein] + [thioredoxin]-disulfide + H2O = L-methionyl-(S)-S-oxide-[protein] + [thioredoxin]-dithiol. The catalysed reaction is [thioredoxin]-disulfide + L-methionine + H2O = L-methionine (S)-S-oxide + [thioredoxin]-dithiol. In terms of biological role, has an important function as a repair enzyme for proteins that have been inactivated by oxidation. Catalyzes the reversible oxidation-reduction of methionine sulfoxide in proteins to methionine. This Acinetobacter baumannii (strain AB307-0294) protein is Peptide methionine sulfoxide reductase MsrA.